The sequence spans 141 residues: Hemoglobin subunit alpha (141 aa).

In terms of domain architecture, Globin spans 1–141 (VLSSTDKSNV…VSTVLTSKYR (141 aa)). Position 3 is a phosphoserine (serine 3). N6-succinyllysine occurs at positions 7 and 11. At lysine 16 the chain carries N6-acetyllysine; alternate. Lysine 16 bears the N6-succinyllysine; alternate mark. A Phosphotyrosine modification is found at tyrosine 24. Serine 35 carries the phosphoserine modification. Residue lysine 40 is modified to N6-succinyllysine. Histidine 58 is an O2 binding site. Histidine 87 lines the heme b pocket. Residue serine 102 is modified to Phosphoserine. A Phosphothreonine modification is found at threonine 108. Serine 124 and serine 131 each carry phosphoserine. Residues threonine 134 and threonine 137 each carry the phosphothreonine modification. Phosphoserine is present on serine 138.

This sequence belongs to the globin family. As to quaternary structure, heterotetramer of two alpha chains and two beta chains. As to expression, red blood cells.

Involved in oxygen transport from the lung to the various peripheral tissues. Its function is as follows. Hemopressin acts as an antagonist peptide of the cannabinoid receptor CNR1. Hemopressin-binding efficiently blocks cannabinoid receptor CNR1 and subsequent signaling. In Pteropus vampyrus (Large flying fox), this protein is Hemoglobin subunit alpha.